Here is a 101-residue protein sequence, read N- to C-terminus: Putative RNA-binding protein RbpA (101 aa).

The 78-residue stretch at 2–79 folds into the RRM domain; that stretch reads SIYVGNLSYD…RDLKVNKAKP (78 aa). Residues 73 to 83 are compositionally biased toward basic and acidic residues; the sequence is KVNKAKPRENR. Positions 73-101 are disordered; that stretch reads KVNKAKPRENRSGGGSFGGGRKSYGGSRY. The span at 84 to 101 shows a compositional bias: gly residues; that stretch reads SGGGSFGGGRKSYGGSRY.

The polypeptide is Putative RNA-binding protein RbpA (rbpA) (Synechocystis sp. (strain ATCC 27184 / PCC 6803 / Kazusa)).